Here is a 468-residue protein sequence, read N- to C-terminus: Aspartate ammonia-lyase (468 aa).

L-aspartate-binding residues include Thr101, Ser140, Thr141, Asn142, Thr187, and His188. Residues Gly317 to Asn326 are SS loop. Residue Ser318 is the Proton acceptor of the active site. The L-aspartate site is built by Ser319 and Lys324.

The protein belongs to the class-II fumarase/aspartase family. Aspartase subfamily. In terms of assembly, homotetramer.

The enzyme catalyses L-aspartate = fumarate + NH4(+). With respect to regulation, unlike E.coli aspartase, the enzyme is not activated by the presence of divalent metal ions at alkaline pH. Its function is as follows. Catalyzes the reversible conversion of L-aspartate to fumarate and ammonia. Is highly specific for L-aspartate in the deamination reaction, and cannot use alternative substrates such as D-aspartic acid, alpha-methyl-DL-aspartic acid, beta-methyl-DL-aspartic acid or L-glutamate. In the reverse reaction, alternative nucleophiles (such as hydroxylamine, hydrazine, methoxylamine and methylamine) can replace ammonia in vitro, leading to the formation of N-substituted aspartic acid derivatives. This is Aspartate ammonia-lyase from Bacillus sp.